A 475-amino-acid polypeptide reads, in one-letter code: Ribulose bisphosphate carboxylase large chain (475 aa).

A propeptide spanning residues 1–2 is cleaved from the precursor; that stretch reads MS. At Pro-3 the chain carries N-acetylproline. Residues Thr-65, Asn-123, and Thr-173 each contribute to the substrate site. Catalysis depends on Lys-175, which acts as the Proton acceptor. A substrate-binding site is contributed by Lys-177. 3 residues coordinate Mg(2+): Lys-201, Asp-203, and Glu-204. At Lys-201 the chain carries N6-carboxylysine. Residues Glu-204, His-294, Arg-295, His-327, Lys-334, Ser-379, Gly-381, Gly-403, and Gly-404 each coordinate substrate. Residue His-294 is the Proton acceptor of the active site.

Belongs to the RuBisCO large chain family. Type I subfamily. Heterohexadecamer of 8 large chains and 8 small chains. Mg(2+) is required as a cofactor. In terms of processing, the disulfide bond which can form between Cys-247 in the large chain dimeric partners within the hexadecamer appears to be associated with oxidative stress and protein turnover. The disulfide bonds reported in 1RBO may be the result of oxidation during crystallization.

It is found in the plastid. It localises to the chloroplast. It catalyses the reaction 2 (2R)-3-phosphoglycerate + 2 H(+) = D-ribulose 1,5-bisphosphate + CO2 + H2O. The catalysed reaction is D-ribulose 1,5-bisphosphate + O2 = 2-phosphoglycolate + (2R)-3-phosphoglycerate + 2 H(+). Abscisic acid (ABA) causes weak inhibition of RuBisCO catalytic activity, but more potent inhibition of RuBisCO activation. Functionally, ruBisCO catalyzes two reactions: the carboxylation of D-ribulose 1,5-bisphosphate, the primary event in carbon dioxide fixation, as well as the oxidative fragmentation of the pentose substrate in the photorespiration process. Both reactions occur simultaneously and in competition at the same active site. Binds to abscisic acid (ABA) which has weakly inhibits carboxylation and more strongly inhibits enzyme activation. This is Ribulose bisphosphate carboxylase large chain from Spinacia oleracea (Spinach).